A 192-amino-acid chain; its full sequence is Probable nicotinate-nucleotide adenylyltransferase (192 aa).

It belongs to the NadD family.

It carries out the reaction nicotinate beta-D-ribonucleotide + ATP + H(+) = deamido-NAD(+) + diphosphate. The protein operates within cofactor biosynthesis; NAD(+) biosynthesis; deamido-NAD(+) from nicotinate D-ribonucleotide: step 1/1. In terms of biological role, catalyzes the reversible adenylation of nicotinate mononucleotide (NaMN) to nicotinic acid adenine dinucleotide (NaAD). In Staphylococcus haemolyticus (strain JCSC1435), this protein is Probable nicotinate-nucleotide adenylyltransferase.